The following is an 84-amino-acid chain: Delta-conotoxin-like MVIB (84 aa).

Residues 1–22 (MKLTCVMIVAVLFLTAWTFVTA) form the signal peptide. Residues 23–51 (DDSRYGLKDLFPKERHEMKNPEASKLNQR) constitute a propeptide that is removed on maturation. Cystine bridges form between Cys54–Cys69, Cys61–Cys73, and Cys68–Cys77. At Pro65 the chain carries 4-hydroxyproline. Ser83 is subject to Serine amide.

It belongs to the conotoxin O1 superfamily. In terms of tissue distribution, expressed by the venom duct.

The protein resides in the secreted. Its function is as follows. Delta-conotoxins bind to site 6 of voltage-gated sodium channels (Nav) and inhibit the inactivation process. The sequence is that of Delta-conotoxin-like MVIB from Conus magus (Magical cone).